The sequence spans 92 residues: Small ribosomal subunit protein uS19 (92 aa).

Belongs to the universal ribosomal protein uS19 family.

In terms of biological role, protein S19 forms a complex with S13 that binds strongly to the 16S ribosomal RNA. This chain is Small ribosomal subunit protein uS19, found in Methylobacterium radiotolerans (strain ATCC 27329 / DSM 1819 / JCM 2831 / NBRC 15690 / NCIMB 10815 / 0-1).